Consider the following 332-residue polypeptide: RNA polymerase principal sigma factor HrdD (332 aa).

Basic residues predominate over residues 1-11 (MATRAVARRKS). Positions 1-25 (MATRAVARRKSAAGETSGSATSVRA) are disordered. Residues 13–22 (AGETSGSATS) show a composition bias toward low complexity. The Polymerase core binding signature appears at 124-137 (DLIQEGNAGLVRAV). The segment at residues 294-313 (LTEVGKEHGLTRERIRQIEK) is a DNA-binding region (H-T-H motif).

It belongs to the sigma-70 factor family. As to quaternary structure, interacts transiently with the RNA polymerase catalytic core.

Sigma factors are initiation factors that promote the attachment of RNA polymerase to specific initiation sites and are then released. The polypeptide is RNA polymerase principal sigma factor HrdD (hrdD) (Streptomyces coelicolor (strain ATCC BAA-471 / A3(2) / M145)).